A 245-amino-acid polypeptide reads, in one-letter code: 1-(5-phosphoribosyl)-5-[(5-phosphoribosylamino)methylideneamino] imidazole-4-carboxamide isomerase (245 aa).

The active-site Proton acceptor is the Asp7. Asp129 functions as the Proton donor in the catalytic mechanism.

It belongs to the HisA/HisF family.

The protein localises to the cytoplasm. The enzyme catalyses 1-(5-phospho-beta-D-ribosyl)-5-[(5-phospho-beta-D-ribosylamino)methylideneamino]imidazole-4-carboxamide = 5-[(5-phospho-1-deoxy-D-ribulos-1-ylimino)methylamino]-1-(5-phospho-beta-D-ribosyl)imidazole-4-carboxamide. The protein operates within amino-acid biosynthesis; L-histidine biosynthesis; L-histidine from 5-phospho-alpha-D-ribose 1-diphosphate: step 4/9. The polypeptide is 1-(5-phosphoribosyl)-5-[(5-phosphoribosylamino)methylideneamino] imidazole-4-carboxamide isomerase (Escherichia coli (strain 55989 / EAEC)).